Here is a 457-residue protein sequence, read N- to C-terminus: Siroheme synthase (457 aa).

A precorrin-2 dehydrogenase /sirohydrochlorin ferrochelatase region spans residues 1 to 204 (MDHLPIFCQL…ADEKAVNATT (204 aa)). Residues 22–23 (DV) and 43–44 (LT) each bind NAD(+). Ser128 carries the post-translational modification Phosphoserine. The tract at residues 216–457 (GEVVLVGAGP…RDKLNWFSSH (242 aa)) is uroporphyrinogen-III C-methyltransferase. Pro225 is an S-adenosyl-L-methionine binding site. Catalysis depends on Asp248, which acts as the Proton acceptor. Lys270 (proton donor) is an active-site residue. S-adenosyl-L-methionine contacts are provided by residues 301-303 (GGD), Ile306, 331-332 (TA), Met382, and Gly411.

The protein in the N-terminal section; belongs to the precorrin-2 dehydrogenase / sirohydrochlorin ferrochelatase family. This sequence in the C-terminal section; belongs to the precorrin methyltransferase family.

It catalyses the reaction uroporphyrinogen III + 2 S-adenosyl-L-methionine = precorrin-2 + 2 S-adenosyl-L-homocysteine + H(+). It carries out the reaction precorrin-2 + NAD(+) = sirohydrochlorin + NADH + 2 H(+). The enzyme catalyses siroheme + 2 H(+) = sirohydrochlorin + Fe(2+). It functions in the pathway cofactor biosynthesis; adenosylcobalamin biosynthesis; precorrin-2 from uroporphyrinogen III: step 1/1. The protein operates within cofactor biosynthesis; adenosylcobalamin biosynthesis; sirohydrochlorin from precorrin-2: step 1/1. It participates in porphyrin-containing compound metabolism; siroheme biosynthesis; precorrin-2 from uroporphyrinogen III: step 1/1. Its pathway is porphyrin-containing compound metabolism; siroheme biosynthesis; siroheme from sirohydrochlorin: step 1/1. It functions in the pathway porphyrin-containing compound metabolism; siroheme biosynthesis; sirohydrochlorin from precorrin-2: step 1/1. In terms of biological role, multifunctional enzyme that catalyzes the SAM-dependent methylations of uroporphyrinogen III at position C-2 and C-7 to form precorrin-2 via precorrin-1. Then it catalyzes the NAD-dependent ring dehydrogenation of precorrin-2 to yield sirohydrochlorin. Finally, it catalyzes the ferrochelation of sirohydrochlorin to yield siroheme. The chain is Siroheme synthase from Salmonella arizonae (strain ATCC BAA-731 / CDC346-86 / RSK2980).